Here is a 207-residue protein sequence, read N- to C-terminus: Small ribosomal subunit protein uS10m (207 aa).

A mitochondrion-targeting transit peptide spans 1-24 (MLSVFGLRTVARCNSTLASGGARA).

The protein belongs to the universal ribosomal protein uS10 family. In terms of assembly, part of the mitochondrial small ribosomal subunit.

The protein localises to the mitochondrion. Its function is as follows. Involved in mitochondrial genome encoded proteins translation. Involved in the binding of tRNA to the ribosomes. In Eremothecium gossypii (strain ATCC 10895 / CBS 109.51 / FGSC 9923 / NRRL Y-1056) (Yeast), this protein is Small ribosomal subunit protein uS10m (RSM10).